A 585-amino-acid polypeptide reads, in one-letter code: DNA ligase (585 aa).

E278 contributes to the ATP binding site. K280 (N6-AMP-lysine intermediate) is an active-site residue. 6 residues coordinate ATP: R285, R301, E330, F370, R444, and K450.

This sequence belongs to the ATP-dependent DNA ligase family. Mg(2+) serves as cofactor.

It carries out the reaction ATP + (deoxyribonucleotide)n-3'-hydroxyl + 5'-phospho-(deoxyribonucleotide)m = (deoxyribonucleotide)n+m + AMP + diphosphate.. DNA ligase that seals nicks in double-stranded DNA during DNA replication, DNA recombination and DNA repair. This Haloferax volcanii (strain ATCC 29605 / DSM 3757 / JCM 8879 / NBRC 14742 / NCIMB 2012 / VKM B-1768 / DS2) (Halobacterium volcanii) protein is DNA ligase.